Reading from the N-terminus, the 350-residue chain is E3 ubiquitin-protein ligase TRIM63 (350 aa).

Residues cysteine 23–arginine 79 form an RING-type zinc finger. The tract at residues arginine 74–alanine 218 is interaction with TTN. Residues glycine 117–leucine 159 form a B box-type zinc finger. Residues cysteine 122, histidine 125, cysteine 145, and histidine 151 each contribute to the Zn(2+) site. Residues glutamate 207–glutamate 269 adopt a coiled-coil conformation. Positions leucine 267–glycine 325 constitute a COS domain. Positions glycine 325–valine 344 are enriched in acidic residues. Positions glycine 325–glutamine 350 are disordered.

Homodimer. Homooligomer and heterooligomer. Interacts with SUMO2, titin/TTN and GMEB1. Interacts with TRIM54 and probably with TRIM55. Interacts with TNNI3. Forms a ternary complex with RACK1 and PRKCE. Interacts with CKM.

It localises to the cytoplasm. The protein localises to the nucleus. It is found in the myofibril. The protein resides in the sarcomere. Its subcellular location is the m line. It localises to the z line. It carries out the reaction S-ubiquitinyl-[E2 ubiquitin-conjugating enzyme]-L-cysteine + [acceptor protein]-L-lysine = [E2 ubiquitin-conjugating enzyme]-L-cysteine + N(6)-ubiquitinyl-[acceptor protein]-L-lysine.. It functions in the pathway protein modification; protein ubiquitination. Its function is as follows. E3 ubiquitin ligase. Mediates the ubiquitination and subsequent proteasomal degradation of CKM, GMEB1 and HIBADH. Regulates the proteasomal degradation of muscle proteins under amino acid starvation, where muscle protein is catabolized to provide other organs with amino acids. Inhibits de novo skeletal muscle protein synthesis under amino acid starvation. Regulates proteasomal degradation of cardiac troponin I/TNNI3 and probably of other sarcomeric-associated proteins. May play a role in striated muscle atrophy and hypertrophy by regulating an anti-hypertrophic PKC-mediated signaling pathway. May regulate the organization of myofibrils through TTN in muscle cells. This chain is E3 ubiquitin-protein ligase TRIM63 (Trim63), found in Mus musculus (Mouse).